We begin with the raw amino-acid sequence, 92 residues long: SPbeta prophage-derived uncharacterized protein YopY (92 aa).

In Bacillus subtilis (strain 168), this protein is SPbeta prophage-derived uncharacterized protein YopY (yopY).